The primary structure comprises 195 residues: Probable nicotinate-nucleotide adenylyltransferase (195 aa).

Belongs to the NadD family.

It carries out the reaction nicotinate beta-D-ribonucleotide + ATP + H(+) = deamido-NAD(+) + diphosphate. Its pathway is cofactor biosynthesis; NAD(+) biosynthesis; deamido-NAD(+) from nicotinate D-ribonucleotide: step 1/1. Functionally, catalyzes the reversible adenylation of nicotinate mononucleotide (NaMN) to nicotinic acid adenine dinucleotide (NaAD). The polypeptide is Probable nicotinate-nucleotide adenylyltransferase (Gluconobacter oxydans (strain 621H) (Gluconobacter suboxydans)).